The following is a 137-amino-acid chain: NADH-quinone oxidoreductase subunit A (137 aa).

3 consecutive transmembrane segments (helical) span residues tryptophan 12–serine 32, phenylalanine 66–tryptophan 86, and threonine 96–phenylalanine 116.

It belongs to the complex I subunit 3 family. As to quaternary structure, NDH-1 is composed of 13 different subunits. Subunits NuoA, H, J, K, L, M, N constitute the membrane sector of the complex.

The protein localises to the cell inner membrane. It carries out the reaction a quinone + NADH + 5 H(+)(in) = a quinol + NAD(+) + 4 H(+)(out). In terms of biological role, NDH-1 shuttles electrons from NADH, via FMN and iron-sulfur (Fe-S) centers, to quinones in the respiratory chain. The immediate electron acceptor for the enzyme in this species is believed to be ubiquinone. Couples the redox reaction to proton translocation (for every two electrons transferred, four hydrogen ions are translocated across the cytoplasmic membrane), and thus conserves the redox energy in a proton gradient. The sequence is that of NADH-quinone oxidoreductase subunit A from Pseudomonas fluorescens (strain Pf0-1).